A 251-amino-acid chain; its full sequence is Mast cell protease 3 (251 aa).

An N-terminal signal peptide occupies residues 1-17 (MVLFLLLVALLSPAGEA). A propeptide spans 18–19 (GK) (activation peptide). Positions 20 to 243 (IIGGHEAKPH…FLSWIQRTMR (224 aa)) constitute a Peptidase S1 domain. Residues C48 and C64 are joined by a disulfide bond. H63 functions as the Charge relay system in the catalytic mechanism. N70 carries N-linked (GlcNAc...) asparagine glycosylation. D107 serves as the catalytic Charge relay system. Disulfide bonds link C141-C207 and C172-C186. S201 (charge relay system) is an active-site residue.

This sequence belongs to the peptidase S1 family. Granzyme subfamily.

It localises to the secreted. It is found in the cytoplasmic granule. This chain is Mast cell protease 3, found in Ovis aries (Sheep).